Reading from the N-terminus, the 320-residue chain is Membrane protein insertase YidC 2 (320 aa).

The first 23 residues, 1–23 (MKNLKKKLTLTGLMTAGLLFLSG), serve as a signal peptide directing secretion. A lipid anchor (N-palmitoyl cysteine) is attached at Cys24. Residue Cys24 is the site of S-diacylglycerol cysteine attachment. 5 consecutive transmembrane segments (helical) span residues 68–88 (YGWG…PLGL), 142–162 (MLSS…IALY), 178–198 (GIPL…LYFI), 217–237 (AMLI…PAGV), and 239–259 (LYWA…TFIM). The tract at residues 270–320 (EFTKNPPKINNEGLKDVTPTSVQENFKEITSERNEKERKSGGRNAGKQNRK) is disordered. Positions 294–309 (NFKEITSERNEKERKS) are enriched in basic and acidic residues.

It belongs to the OXA1/ALB3/YidC family. Type 2 subfamily.

It is found in the cell membrane. Required for the insertion and/or proper folding and/or complex formation of integral membrane proteins into the membrane. Involved in integration of membrane proteins that insert both dependently and independently of the Sec translocase complex, as well as at least some lipoproteins. The polypeptide is Membrane protein insertase YidC 2 (Lactococcus lactis subsp. lactis (strain IL1403) (Streptococcus lactis)).